We begin with the raw amino-acid sequence, 220 residues long: Nucleoside diphosphate kinase, mitochondrial (220 aa).

The N-terminal 57 residues, 1-57 (MFSRFARAFPKILASGASQRTFATVQKAFANPTSKKLIVGSSLLIGSAFATTSFVAC), are a transit peptide targeting the mitochondrion. 6 residues coordinate ATP: Lys80, Phe128, Arg156, Thr162, Arg173, and Asn183. Residue His186 is the Pros-phosphohistidine intermediate of the active site.

The protein belongs to the NDK family. Mg(2+) is required as a cofactor.

The protein localises to the mitochondrion intermembrane space. The catalysed reaction is a 2'-deoxyribonucleoside 5'-diphosphate + ATP = a 2'-deoxyribonucleoside 5'-triphosphate + ADP. It carries out the reaction a ribonucleoside 5'-diphosphate + ATP = a ribonucleoside 5'-triphosphate + ADP. In terms of biological role, major role in the synthesis of nucleoside triphosphates other than ATP. The ATP gamma phosphate is transferred to the NDP beta phosphate via a ping-pong mechanism, using a phosphorylated active-site intermediate. The polypeptide is Nucleoside diphosphate kinase, mitochondrial (ndkM) (Dictyostelium discoideum (Social amoeba)).